The primary structure comprises 87 residues: NADH dehydrogenase [ubiquinone] 1 alpha subcomplex subunit 4-like 2 (87 aa).

It belongs to the complex I NDUFA4 subunit family.

The protein is NADH dehydrogenase [ubiquinone] 1 alpha subcomplex subunit 4-like 2 (NDUFA4L2) of Homo sapiens (Human).